Here is a 242-residue protein sequence, read N- to C-terminus: Ethanolamine ammonia-lyase small subunit (242 aa).

Adenosylcob(III)alamin is bound by residues Val-155 and Glu-176.

The protein belongs to the EutC family. In terms of assembly, the basic unit is a heterodimer which dimerizes to form tetramers. The heterotetramers trimerize; 6 large subunits form a core ring with 6 small subunits projecting outwards. It depends on adenosylcob(III)alamin as a cofactor.

It localises to the bacterial microcompartment. The enzyme catalyses ethanolamine = acetaldehyde + NH4(+). It participates in amine and polyamine degradation; ethanolamine degradation. In terms of biological role, catalyzes the deamination of various vicinal amino-alcohols to oxo compounds. Allows this organism to utilize ethanolamine as the sole source of nitrogen and carbon in the presence of external vitamin B12. The chain is Ethanolamine ammonia-lyase small subunit from Clostridium acetobutylicum (strain ATCC 824 / DSM 792 / JCM 1419 / IAM 19013 / LMG 5710 / NBRC 13948 / NRRL B-527 / VKM B-1787 / 2291 / W).